The primary structure comprises 955 residues: Alpha-1,4 glucan phosphorylase L isozyme, chloroplastic/amyloplastic (955 aa).

A chloroplast-targeting transit peptide spans 1–43; that stretch reads MSRLSGITPRARDDRSQFQNPRLEIAVPDRTAGLQRTKRTLLV. The disordered stretch occupies residues 522-550; sequence KVVTESEKDELEEKDTELEKDEDPVPAPI. Acidic residues predominate over residues 528–545; that stretch reads EKDELEEKDTELEKDEDP. Lys801 bears the N6-(pyridoxal phosphate)lysine mark.

This sequence belongs to the glycogen phosphorylase family. Requires pyridoxal 5'-phosphate as cofactor.

Its subcellular location is the plastid. It is found in the chloroplast. The protein localises to the amyloplast. It catalyses the reaction [(1-&gt;4)-alpha-D-glucosyl](n) + phosphate = [(1-&gt;4)-alpha-D-glucosyl](n-1) + alpha-D-glucose 1-phosphate. Functionally, phosphorylase is an important allosteric enzyme in carbohydrate metabolism. Enzymes from different sources differ in their regulatory mechanisms and in their natural substrates. However, all known phosphorylases share catalytic and structural properties. The protein is Alpha-1,4 glucan phosphorylase L isozyme, chloroplastic/amyloplastic of Ipomoea batatas (Sweet potato).